We begin with the raw amino-acid sequence, 229 residues long: N-(5'-phosphoribosyl)anthranilate isomerase (229 aa).

The protein belongs to the TrpF family.

It catalyses the reaction N-(5-phospho-beta-D-ribosyl)anthranilate = 1-(2-carboxyphenylamino)-1-deoxy-D-ribulose 5-phosphate. It participates in amino-acid biosynthesis; L-tryptophan biosynthesis; L-tryptophan from chorismate: step 3/5. This is N-(5'-phosphoribosyl)anthranilate isomerase from Clostridium beijerinckii (strain ATCC 51743 / NCIMB 8052) (Clostridium acetobutylicum).